The chain runs to 159 residues: Phosphopantetheine adenylyltransferase (159 aa).

T10 is a binding site for substrate. ATP contacts are provided by residues T10 to F11 and H18. 3 residues coordinate substrate: K42, M74, and R88. Residues G89–R91, E99, and W124–S130 contribute to the ATP site.

The protein belongs to the bacterial CoaD family. As to quaternary structure, homohexamer. Requires Mg(2+) as cofactor.

It is found in the cytoplasm. The catalysed reaction is (R)-4'-phosphopantetheine + ATP + H(+) = 3'-dephospho-CoA + diphosphate. It participates in cofactor biosynthesis; coenzyme A biosynthesis; CoA from (R)-pantothenate: step 4/5. Reversibly transfers an adenylyl group from ATP to 4'-phosphopantetheine, yielding dephospho-CoA (dPCoA) and pyrophosphate. This chain is Phosphopantetheine adenylyltransferase, found in Yersinia enterocolitica serotype O:8 / biotype 1B (strain NCTC 13174 / 8081).